A 313-amino-acid polypeptide reads, in one-letter code: Fe-S cluster assembly protein dre2 (313 aa).

Disordered regions lie at residues 1–25 and 151–187; these read MSIT…SQKR and GRKK…AQNN. Residues 20–145 are N-terminal SAM-like domain; the sequence is NGSQKRNLLL…FEKPVQEAAV (126 aa). Residues 146 to 203 are linker; the sequence is PLKLGGRKKKDKTNGVNGVQNGVATNGASTNGVGMFDPAQNNDDELIDEDALLSDDDL. Over residues 159–177 the composition is skewed to polar residues; it reads NGVNGVQNGVATNGASTNG. The [2Fe-2S] cluster site is built by Cys213, Cys225, Cys228, and Cys230. The fe-S binding site A stretch occupies residues 213-230; the sequence is CVPETAKKRRRPCKDCTC. Residues Cys276, Cys279, Cys287, and Cys290 each contribute to the [4Fe-4S] cluster site. 2 short sequence motifs (cx2C motif) span residues 276 to 279 and 287 to 290; these read CNSC and CSSC. Residues 276-290 form a fe-S binding site B region; sequence CNSCSLGDAFRCSSC.

Belongs to the anamorsin family. Monomer. Interacts with tah18. Interacts with mia40. It depends on [2Fe-2S] cluster as a cofactor. [4Fe-4S] cluster is required as a cofactor.

It is found in the cytoplasm. The protein resides in the mitochondrion intermembrane space. Its function is as follows. Component of the cytosolic iron-sulfur (Fe-S) protein assembly (CIA) machinery required for the maturation of extramitochondrial Fe-S proteins. Part of an electron transfer chain functioning in an early step of cytosolic Fe-S biogenesis, facilitating the de novo assembly of a [4Fe-4S] cluster on the scaffold complex cfd1-nbp35. Electrons are transferred to dre2 from NADPH via the FAD- and FMN-containing protein tah18. Tah18-dre2 are also required for the assembly of the diferric tyrosyl radical cofactor of ribonucleotide reductase (RNR), probably by providing electrons for reduction during radical cofactor maturation in the catalytic small subunit rnr2. In Aspergillus flavus (strain ATCC 200026 / FGSC A1120 / IAM 13836 / NRRL 3357 / JCM 12722 / SRRC 167), this protein is Fe-S cluster assembly protein dre2.